Consider the following 206-residue polypeptide: Small ribosomal subunit protein uS4 (206 aa).

The region spanning 96 to 156 (GRLDNVVYRM…EKAKNQLRVK (61 aa)) is the S4 RNA-binding domain.

The protein belongs to the universal ribosomal protein uS4 family. Part of the 30S ribosomal subunit. Contacts protein S5. The interaction surface between S4 and S5 is involved in control of translational fidelity.

One of the primary rRNA binding proteins, it binds directly to 16S rRNA where it nucleates assembly of the body of the 30S subunit. In terms of biological role, with S5 and S12 plays an important role in translational accuracy. The polypeptide is Small ribosomal subunit protein uS4 (Marinobacter nauticus (strain ATCC 700491 / DSM 11845 / VT8) (Marinobacter aquaeolei)).